The sequence spans 202 residues: LexA repressor (202 aa).

Residues 28–48 constitute a DNA-binding region (H-T-H motif); the sequence is IAEIARAIGVSSPHGVREQLR. Residues Ser-120 and Lys-157 each act as for autocatalytic cleavage activity in the active site.

This sequence belongs to the peptidase S24 family. Homodimer.

It carries out the reaction Hydrolysis of Ala-|-Gly bond in repressor LexA.. In terms of biological role, represses a number of genes involved in the response to DNA damage (SOS response), including recA and lexA. In the presence of single-stranded DNA, RecA interacts with LexA causing an autocatalytic cleavage which disrupts the DNA-binding part of LexA, leading to derepression of the SOS regulon and eventually DNA repair. This chain is LexA repressor, found in Methylococcus capsulatus (strain ATCC 33009 / NCIMB 11132 / Bath).